A 443-amino-acid polypeptide reads, in one-letter code: Xaa-Pro dipeptidase (443 aa).

Mn(2+) contacts are provided by Asp-246, Asp-257, His-339, Glu-384, and Glu-423.

Belongs to the peptidase M24B family. Bacterial-type prolidase subfamily. Mn(2+) is required as a cofactor.

It carries out the reaction Xaa-L-Pro dipeptide + H2O = an L-alpha-amino acid + L-proline. In terms of biological role, splits dipeptides with a prolyl residue in the C-terminal position. This is Xaa-Pro dipeptidase from Yersinia pestis bv. Antiqua (strain Nepal516).